A 284-amino-acid polypeptide reads, in one-letter code: 2-dehydro-3-deoxyphosphooctonate aldolase (284 aa).

The protein belongs to the KdsA family.

Its subcellular location is the cytoplasm. It carries out the reaction D-arabinose 5-phosphate + phosphoenolpyruvate + H2O = 3-deoxy-alpha-D-manno-2-octulosonate-8-phosphate + phosphate. It participates in carbohydrate biosynthesis; 3-deoxy-D-manno-octulosonate biosynthesis; 3-deoxy-D-manno-octulosonate from D-ribulose 5-phosphate: step 2/3. Its pathway is bacterial outer membrane biogenesis; lipopolysaccharide biosynthesis. This is 2-dehydro-3-deoxyphosphooctonate aldolase from Burkholderia mallei (strain NCTC 10247).